The following is a 648-amino-acid chain: MSTFLDMLSGSQCVSLEKCGDVVVSTNDCMIALYCHFCRDLFTQLPEFLRHLQGAHSDVLHFTKEHNVYSVEELMSGEQEDAQSVGHNSSSSDSRGLAKSEDSRATEATEDNSDNSPVKSEEKGSQNEINLLAEVTNILLQTKEKEHINDKLKPENGGFKGPRKKANSESNSLRICNLKSHTIARTSRKRMSIIKNRILRVIDSDLSANHEMKPSEPNSKILITEPIQEANIPGICLETPPKPIPSSSNLSVRKSSLTEANVSLAHTNYAAKKTTPTLPKLLNCAPKPILPSQQAQVHSGSSGIHEVYHISKAASQVPKEMKSFPIEITQIDVFPPRILPETSTTSDKEEDVNAPVENNTRSLYNAQNLPKDKPKKFFKKRGELWMKNEGKITKSKVNPIIVKQVQTSNVKSSPGKTQIRSSDKTKCFASEFNSTKNRKLKMENFIALKKEDPCSIRSIRLNKMATIGNCEILKVVGLPAITDNQIEDTLLQDELETMRKKADQFSKIYRKYDSIWNYRKIVPPGKPEHISQKMFALTREVNQTMGCNLPNSAIKNIINQISVWHYNIYTKNIVLDTISETARYTLNLFSFLPVSFAYFCKCCDDIFTLNEDYIRHLVSQQARYQCTKCIKTFKYQGHYDKHMRTVHP.

A C2H2-type 1 zinc finger spans residues 33-56; the sequence is LYCHFCRDLFTQLPEFLRHLQGAH. 2 disordered regions span residues 76 to 127 and 146 to 170; these read SGEQ…GSQN and EHIN…NSES. A compositionally biased stretch (polar residues) spans 85–94; it reads VGHNSSSSDS. Residues 96 to 107 show a composition bias toward basic and acidic residues; sequence GLAKSEDSRATE. Residues 598-620 form a C2H2-type 2; degenerate zinc finger; the sequence is YFCKCCDDIFTLNEDYIRHLVSQ. The segment at 624–647 adopts a C2H2-type 3 zinc-finger fold; that stretch reads YQCTKCIKTFKYQGHYDKHMRTVH.

The protein belongs to the Teflon family.

The protein resides in the nucleus. It localises to the chromosome. Its function is as follows. Specifically required in males for proper segregation of autosomal bivalents at meiosis I. Expression is required in the male germ line prior to spermatocyte stage S4. May have a role as a bridging molecule maintaining adhesion to hold autosome bivalents together via heterochromatic connections. The polypeptide is Protein teflon (Drosophila yakuba (Fruit fly)).